Reading from the N-terminus, the 96-residue chain is Small ribosomal subunit protein bS18 (96 aa).

Positions 1–18 (MPPPRGKGRFGKDKRPKR) are enriched in basic residues. The tract at residues 1-21 (MPPPRGKGRFGKDKRPKRNTQ) is disordered.

This sequence belongs to the bacterial ribosomal protein bS18 family. In terms of assembly, part of the 30S ribosomal subunit. Forms a tight heterodimer with protein bS6.

Its function is as follows. Binds as a heterodimer with protein bS6 to the central domain of the 16S rRNA, where it helps stabilize the platform of the 30S subunit. This chain is Small ribosomal subunit protein bS18, found in Methylibium petroleiphilum (strain ATCC BAA-1232 / LMG 22953 / PM1).